The following is a 611-amino-acid chain: Actin-binding LIM protein 2 (611 aa).

4 LIM zinc-binding domains span residues 22-81, 81-141, 151-210, and 210-270; these read ILCN…LYGT, TRCF…VSVG, RSCG…KFGI, and IRCD…ARTE. Cys83, Cys86, His103, Cys106, Cys109, Cys112, Cys131, and Cys134 together coordinate Zn(2+). Zn(2+) contacts are provided by Cys212, Cys215, His232, Cys235, Cys238, Cys241, His260, and Cys263. Residues 269-278 show a composition bias toward basic and acidic residues; the sequence is TEDRNKETRT. 2 disordered regions span residues 269–295 and 336–527; these read TEDRNKETRTSSESIISVPASSTSGSP and YISH…DQRN. Composition is skewed to low complexity over residues 279 to 295 and 363 to 372; these read SSESIISVPASSTSGSP and SSPSSTGSVS. Phosphoserine is present on residues Ser282, Ser294, Ser364, and Ser367. The segment covering 393–404 has biased composition (polar residues); sequence SGRSTPSLSVLS. Ser452 is subject to Phosphoserine. The residue at position 472 (Thr472) is a Phosphothreonine. The span at 473 to 488 shows a compositional bias: polar residues; it reads RTNSPDLDTQSLSHSS. Phosphoserine occurs at positions 476 and 578. Positions 543–611 constitute an HP domain; sequence MREYKIYPYD…NDLKKKALLF (69 aa).

Interacts with F-actin and ABRA. In terms of tissue distribution, highly expressed in skeletal muscle.

Its subcellular location is the cytoplasm. May act as scaffold protein. May stimulate ABRA activity and ABRA-dependent SRF transcriptional activity. The chain is Actin-binding LIM protein 2 (ABLIM2) from Homo sapiens (Human).